A 732-amino-acid chain; its full sequence is S-adenosyl-L-methionine-dependent tRNA 4-demethylwyosine synthase TYW1 (732 aa).

A Flavodoxin-like domain is found at 79–237 (VKIFYGSQTG…DFRAWKTKFI (159 aa)). FMN is bound by residues 85 to 89 (SQTGT) and 176 to 208 (VFGL…HRVM). The interval 248-314 (RKKSCGGHCK…HQSLNSIVDV (67 aa)) is disordered. Positions 259–286 (GKCESHQHGSEEREEGSHEQDELHHRDT) are enriched in basic and acidic residues. A compositionally biased stretch (acidic residues) spans 287 to 301 (EEEEPFESSSEEEFG). Positions 400–644 (YGIESHRCME…VDLIPEYEIA (245 aa)) constitute a Radical SAM core domain. 3 residues coordinate [4Fe-4S] cluster: C416, C420, and C423.

It belongs to the TYW1 family. Requires [4Fe-4S] cluster as cofactor.

The catalysed reaction is N(1)-methylguanosine(37) in tRNA(Phe) + pyruvate + S-adenosyl-L-methionine = 4-demethylwyosine(37) in tRNA(Phe) + 5'-deoxyadenosine + L-methionine + CO2 + H2O. The protein operates within tRNA modification; wybutosine-tRNA(Phe) biosynthesis. Probable component of the wybutosine biosynthesis pathway. Wybutosine is a hyper modified guanosine with a tricyclic base found at the 3'-position adjacent to the anticodon of eukaryotic phenylalanine tRNA. Catalyzes the condensation of N-methylguanine with 2 carbon atoms from pyruvate to form the tricyclic 4-demethylwyosine, an intermediate in wybutosine biosynthesis. This chain is S-adenosyl-L-methionine-dependent tRNA 4-demethylwyosine synthase TYW1 (TYW1), found in Homo sapiens (Human).